A 431-amino-acid chain; its full sequence is GDP-L-galactose phosphorylase 2 (431 aa).

H235 functions as the Tele-GMP-histidine intermediate in the catalytic mechanism. Acidic residues predominate over residues 398-407 (EEEEEEELEE). Residues 398–417 (EEEEEEELEEQNSMNGGSFT) are disordered.

It belongs to the GDPGP1 family. In terms of assembly, interacts with TLP1. Expressed in leaves, stems, roots, flowers and siliques.

Its subcellular location is the cytoplasm. The protein resides in the nucleus. The catalysed reaction is GDP-beta-L-galactose + phosphate = beta-L-galactose 1-phosphate + GDP + H(+). It participates in cofactor biosynthesis; L-ascorbate biosynthesis via GDP-alpha-D-mannose pathway; L-ascorbate from GDP-alpha-D-mannose: step 2/5. Functionally, catalyzes a reaction of the Smirnoff-Wheeler pathway, the major route to ascorbate biosynthesis in plants. Acts as a phosphorylase rather than as a transferase. Uses preferentially GDP-L-galactose and GDP-D-glucose as substrates. Lower activity with GDP-L-fucose, very low activity with GDP-D-mannose, and no activity with UDP-D-glucose, UDP-D-galactose or ADP-D-glucose. Highly specific for inorganic phosphate as the guanylyl acceptor. In Arabidopsis thaliana (Mouse-ear cress), this protein is GDP-L-galactose phosphorylase 2 (VTC5).